The primary structure comprises 323 residues: Probable inactive poly [ADP-ribose] polymerase SRO2 (323 aa).

Residues 31-257 (SSVSHAGSSF…FASRPSSPWV (227 aa)) form the PARP catalytic domain. The RST domain occupies 250–321 (SRPSSPWVSF…IKNHKNRNKV (72 aa)).

In terms of assembly, interacts with STO.

The protein localises to the nucleus. Probable inactive ADP-ribosyltransferase that may be involved in stress and developmental responses. The protein is Probable inactive poly [ADP-ribose] polymerase SRO2 (SRO2) of Arabidopsis thaliana (Mouse-ear cress).